Here is an 874-residue protein sequence, read N- to C-terminus: Alanine--tRNA ligase (874 aa).

4 residues coordinate Zn(2+): His-565, His-569, Cys-666, and His-670.

The protein belongs to the class-II aminoacyl-tRNA synthetase family. The cofactor is Zn(2+).

The protein localises to the cytoplasm. It catalyses the reaction tRNA(Ala) + L-alanine + ATP = L-alanyl-tRNA(Ala) + AMP + diphosphate. Catalyzes the attachment of alanine to tRNA(Ala) in a two-step reaction: alanine is first activated by ATP to form Ala-AMP and then transferred to the acceptor end of tRNA(Ala). Also edits incorrectly charged Ser-tRNA(Ala) and Gly-tRNA(Ala) via its editing domain. The sequence is that of Alanine--tRNA ligase from Polynucleobacter asymbioticus (strain DSM 18221 / CIP 109841 / QLW-P1DMWA-1) (Polynucleobacter necessarius subsp. asymbioticus).